Here is a 237-residue protein sequence, read N- to C-terminus: Flagellar L-ring protein (237 aa).

The first 16 residues, 1 to 16 (MIKRSAVVLMAVILTG), serve as a signal peptide directing secretion. C17 carries N-palmitoyl cysteine lipidation. The S-diacylglycerol cysteine moiety is linked to residue C17. A disordered region spans residues 122–143 (PPDSSGDMSTDSNSSSDGKGSV). Low complexity predominate over residues 124–140 (DSSGDMSTDSNSSSDGK).

The protein belongs to the FlgH family. The basal body constitutes a major portion of the flagellar organelle and consists of four rings (L,P,S, and M) mounted on a central rod.

The protein resides in the cell outer membrane. It is found in the bacterial flagellum basal body. In terms of biological role, assembles around the rod to form the L-ring and probably protects the motor/basal body from shearing forces during rotation. The sequence is that of Flagellar L-ring protein from Allorhizobium ampelinum (strain ATCC BAA-846 / DSM 112012 / S4) (Agrobacterium vitis (strain S4)).